The primary structure comprises 870 residues: MADDTDNPPNIQIPAKSYGFPPEAFDPRRLPDYDTNFLPAHDLEAFIQALAAPDFVQSPDDASSMRLNSPGLHSPSSLDITKDDYDHSEARAALASVADVAAPGGGNNHHRRTSTGTFFSAHNDWAPVSEKVIKTDRDEKRNKRGKDRKNKKPRKGVAPLRTLVGTRSKDETREGYLYSLLKWPFLLFVSFWIVGLGMAYLATRFYIYFYEQFVAWRGRREQLRRAMRATGNYKDWVAAARNMDDFFGNQRWKEENDFAYYDSKTVRRVWDQMRRCREKAEEVERELESQSQNSDSGVASGEETSNTKAGGGNNGNDKKTQPVEDLKALIEACVKNNFVGIENPRLYSQTYYGTKNLVQNYVDEVERSIKFLIDTKQLTKEQKRVMFKGICANYGRTALCLSGGATFAYYHFGVVKALLEVDYLPDIITGTSGGALVAALVATRTNDELKELLNPALAHKITACRESFTVWFWRWWKTGARFDSVDWAKQCAWWCHGSLTFREAYERTGRILNVSCVPSDPHSPTILCNYLTSPDCVIWSAVLASAAVPGILNPVVLMMKNRDGSLEPYSFGHKWKDGSLRTDIPIKSLNLHFNVNFSIVSQVNPHINLFFFSSRGSVGQPVTHRKGRGWRGGYLGSATEQYIKLDLTKWLRVLRQLELLPRPLGQDWSQLWLQTFGGTVTIWPKSIPSDFLKILSDPDPPRLARMIHEGQQSAFPKVKFIANRLKIERLVERGRRETRDRRNAANAFTATGDGEGSYASHSIVDAMGGKHPLAPSSSGGAGDRRGSIESILSEDDLRSLLIKGREGVHTSGGSSTGTEDELTMTELEGEDDDGGTSRVSEGGSRNRYFEGALEEEDGALEVAASDHSRT.

Disordered stretches follow at residues 1 to 24 (MADD…PPEA) and 131 to 158 (KVIK…KGVA). Residues 131–141 (KVIKTDRDEKR) show a composition bias toward basic and acidic residues. Positions 142 to 155 (NKRGKDRKNKKPRK) are enriched in basic residues. The chain crosses the membrane as a helical span at residues 183–203 (WPFLLFVSFWIVGLGMAYLAT). The interval 281–320 (EEVERELESQSQNSDSGVASGEETSNTKAGGGNNGNDKKT) is disordered. Polar residues predominate over residues 289–308 (SQSQNSDSGVASGEETSNTK). The PNPLA domain maps to 399–590 (LCLSGGATFA…RTDIPIKSLN (192 aa)). Residues 430–434 (GTSGG) carry the GXSXG motif. The Nucleophile role is filled by Ser-432. Asp-577 acts as the Proton acceptor in catalysis. Disordered regions lie at residues 735–786 (RRET…DRRG) and 804–870 (GREG…HSRT). The span at 818 to 834 (TEDELTMTELEGEDDDG) shows a compositional bias: acidic residues.

The protein belongs to the PLPL family.

It is found in the membrane. Functionally, probable lipid hydrolase. The sequence is that of Patatin-like phospholipase domain-containing protein NCU11180 from Neurospora crassa (strain ATCC 24698 / 74-OR23-1A / CBS 708.71 / DSM 1257 / FGSC 987).